The primary structure comprises 275 residues: ATP synthase subunit delta (275 aa).

Belongs to the ATPase delta chain family. F-type ATPases have 2 components, F(1) - the catalytic core - and F(0) - the membrane proton channel. F(1) has five subunits: alpha(3), beta(3), gamma(1), delta(1), epsilon(1). F(0) has three main subunits: a(1), b(2) and c(10-14). The alpha and beta chains form an alternating ring which encloses part of the gamma chain. F(1) is attached to F(0) by a central stalk formed by the gamma and epsilon chains, while a peripheral stalk is formed by the delta and b chains.

Its subcellular location is the cell membrane. Functionally, f(1)F(0) ATP synthase produces ATP from ADP in the presence of a proton or sodium gradient. F-type ATPases consist of two structural domains, F(1) containing the extramembraneous catalytic core and F(0) containing the membrane proton channel, linked together by a central stalk and a peripheral stalk. During catalysis, ATP synthesis in the catalytic domain of F(1) is coupled via a rotary mechanism of the central stalk subunits to proton translocation. In terms of biological role, this protein is part of the stalk that links CF(0) to CF(1). It either transmits conformational changes from CF(0) to CF(1) or is implicated in proton conduction. The polypeptide is ATP synthase subunit delta (Pseudarthrobacter chlorophenolicus (strain ATCC 700700 / DSM 12829 / CIP 107037 / JCM 12360 / KCTC 9906 / NCIMB 13794 / A6) (Arthrobacter chlorophenolicus)).